The sequence spans 76 residues: Adropin (76 aa).

An N-terminal signal peptide occupies residues M1–A33. The tract at residues I41–P76 is disordered. A compositionally biased stretch (pro residues) spans S52–K65.

The protein resides in the secreted. Functionally, involved in the regulation of glucose homeostasis and lipid metabolism. The polypeptide is Adropin (ENHO) (Bos taurus (Bovine)).